The following is a 184-amino-acid chain: Dual specificity protein phosphatase 22 (184 aa).

Residue glycine 2 is the site of N-myristoyl glycine attachment. Residues 4-144 (GMSQILPGLY…LQEFEKHEVH (141 aa)) enclose the Tyrosine-protein phosphatase domain. Residue cysteine 88 is the Phosphocysteine intermediate of the active site. Residues leucine 89, alanine 90, valine 92, serine 93, and arginine 94 each coordinate a protein.

It belongs to the protein-tyrosine phosphatase family. Non-receptor class dual specificity subfamily. In terms of assembly, monomer. Interacts with LCK; the interaction is direct. Interacts with UBR2; the interaction is direct. Post-translationally, myristoylation regulates subcellular location, and is necessary for activation of JNK.

Its subcellular location is the cytoplasm. The enzyme catalyses O-phospho-L-tyrosyl-[protein] + H2O = L-tyrosyl-[protein] + phosphate. The catalysed reaction is O-phospho-L-seryl-[protein] + H2O = L-seryl-[protein] + phosphate. It catalyses the reaction O-phospho-L-threonyl-[protein] + H2O = L-threonyl-[protein] + phosphate. Its function is as follows. Dual specificity phosphatase; can dephosphorylate both phosphotyrosine and phosphoserine or phosphothreonine residues. Activates the JNK signaling pathway. Inhibits T-cell receptor signaling and T-cell mediated immune responses, acting, at least in part, by inducing degradation of E3 ubiquitin ligase UBR2. Dephosphorylates and thereby induces 'Lys-48'-linked ubiquitination of UBR2, leading to proteasomal degradation of UBR2. Dephosphorylates and thereby inactivates tyrosine kinase LCK. Inhibits UBR2-mediated 'Lys-63'-linked ubiquitination of LCK. May play a role in B-cell receptor (BCR) signaling and B-cell function. The sequence is that of Dual specificity protein phosphatase 22 (Dusp22) from Mus musculus (Mouse).